The sequence spans 475 residues: Tetratricopeptide repeat protein 29 (475 aa).

TPR repeat units follow at residues 92 to 131 (DALR…EDAE), 136 to 173 (FEDV…AQLI), 182 to 215 (AEAH…TQGR), 234 to 267 (LRTY…AKEG), 274 to 307 (AEAS…STDL), 314 to 347 (GRGY…ARNN), and 354 to 387 (VRAS…TVEL). The interval 437–475 (IEPDPVTEEFRGSTVEAVSQNSERLEELSRFPGDQKNET) is disordered. Over residues 459–475 (ERLEELSRFPGDQKNET) the composition is skewed to basic and acidic residues.

As to expression, expressed in spermatozoa (at protein level).

Its subcellular location is the cytoplasm. It localises to the cytoskeleton. The protein localises to the flagellum axoneme. Its function is as follows. Axonemal protein which is implicated in axonemal and/or peri-axonemal structure assembly and regulates flagellum assembly and beating and therefore sperm motility. In Homo sapiens (Human), this protein is Tetratricopeptide repeat protein 29 (TTC29).